We begin with the raw amino-acid sequence, 377 residues long: DNA-directed RNA polymerase subunit alpha (377 aa).

The segment at 1–259 (MSDSSHNLLY…KHFSVFEKMD (259 aa)) is alpha N-terminal domain (alpha-NTD). The interval 276-377 (KDDILHKLVL…KIRLSKNTKG (102 aa)) is alpha C-terminal domain (alpha-CTD).

The protein belongs to the RNA polymerase alpha chain family. Homodimer. The RNAP catalytic core consists of 2 alpha, 1 beta, 1 beta' and 1 omega subunit. When a sigma factor is associated with the core the holoenzyme is formed, which can initiate transcription.

It catalyses the reaction RNA(n) + a ribonucleoside 5'-triphosphate = RNA(n+1) + diphosphate. Functionally, DNA-dependent RNA polymerase catalyzes the transcription of DNA into RNA using the four ribonucleoside triphosphates as substrates. The polypeptide is DNA-directed RNA polymerase subunit alpha (Chlamydia trachomatis serovar A (strain ATCC VR-571B / DSM 19440 / HAR-13)).